Here is a 180-residue protein sequence, read N- to C-terminus: Dual-action ribosomal maturation protein DarP (180 aa).

Belongs to the DarP family.

The protein localises to the cytoplasm. Its function is as follows. Member of a network of 50S ribosomal subunit biogenesis factors which assembles along the 30S-50S interface, preventing incorrect 23S rRNA structures from forming. Promotes peptidyl transferase center (PTC) maturation. The chain is Dual-action ribosomal maturation protein DarP from Pasteurella multocida (strain Pm70).